The chain runs to 981 residues: Transcription factor TAC1 (981 aa).

Residues 1–29 are compositionally biased toward polar residues; the sequence is MDTSSSSGTHPSTFNNLTKQQELTGNDPN. Positions 1-33 are disordered; it reads MDTSSSSGTHPSTFNNLTKQQELTGNDPNDTNR. The zn(2)-C6 fungal-type DNA-binding region spans 40–68; it reads CDSCRRKKIKCNGSYPCGNCIQAKNTSNC. 3 disordered regions span residues 74-106, 165-199, and 868-902; these read PVRK…TFSG, HSNS…TSHS, and LRDN…SNST. A compositionally biased stretch (low complexity) spans 165–177; the sequence is HSNSSMFNNNSLS. Over residues 868 to 880 the composition is skewed to polar residues; that stretch reads LRDNSTNHGQNNM. A compositionally biased stretch (low complexity) spans 881 to 902; it reads NPSPTITNNTYNSNINTGSNST.

Phosphorylated. Phosphorylation leads to hyperactivation.

The protein localises to the nucleus. Drugs such as farnesol and 1-dodecanol are able to hyperactivate TAC1 probably via phosphorylation by the Mediator complex. Functionally, transcriptional activator of drug-responsive genes including the ABC-type transporters CDR1 and CDR2, as well as HSP12 and RTA3. Binds the cis-acting regulatory drug-responsive elements (DREs) with the consensus sequence 5'-CGGAWATCGGATATTTTTTT-3' in the promoters of target genes. This chain is Transcription factor TAC1, found in Candida albicans (strain SC5314 / ATCC MYA-2876) (Yeast).